The primary structure comprises 857 residues: uncharacterized protein (857 aa).

Disordered stretches follow at residues 316 to 339 (PPAPSLEQPENKTMPEIKEGTKEN), 484 to 561 (AKQP…PRTN), 619 to 777 (GQFP…PKPQ), and 809 to 836 (EQRPEREAMKRQAQQERENAVKNPSTGK). 3 stretches are compositionally biased toward basic and acidic residues: residues 324-339 (PENKTMPEIKEGTKEN), 518-534 (KKTEELKQSRNTAKAEE), and 630-640 (QRAESSIDKDC). A compositionally biased stretch (polar residues) spans 683 to 700 (RTTTVQPHSHSAQPTTLR). Residues 708 to 725 (SSSLIASAKPAPPISSSS) are compositionally biased toward low complexity. Polar residues predominate over residues 726-738 (TGPNVTNPNQSSA). Basic and acidic residues predominate over residues 809–828 (EQRPEREAMKRQAQQERENA).

This is an uncharacterized protein from Mus musculus (Mouse).